The sequence spans 72 residues: Large ribosomal subunit protein bL31 (72 aa).

Zn(2+)-binding residues include cysteine 16, cysteine 18, cysteine 36, and cysteine 39.

It belongs to the bacterial ribosomal protein bL31 family. Type A subfamily. Part of the 50S ribosomal subunit. It depends on Zn(2+) as a cofactor.

Binds the 23S rRNA. The chain is Large ribosomal subunit protein bL31 from Geobacter sp. (strain M21).